The chain runs to 1460 residues: CLIP-associating protein 1-A (1460 aa).

HEAT repeat units follow at residues 87 to 124 (TQLGTVLPSLMDRLGDAKDSVREQDQSLLIKIMEQASN) and 163 to 200 (LTLSKIVPHICNLLGDPNSQVRDAAINCLVEIYRHVGE). The interval 237–293 (SDKNFDDEDSVDGNRPSSASSSASSKAPQTARRGVSLGTARRPGPSSAAAKTGGTAK) is disordered. Positions 279-293 (PGPSSAAAKTGGTAK) are enriched in low complexity. HEAT repeat units follow at residues 407 to 442 (HGAEAIMPTVFNLVPNSAKIMATSGIVAIRLIIRHT) and 443 to 479 (HVPRLIPIITSNCTSKSVAVRRRCYDFLDLLLQEWQT). Disordered regions lie at residues 545–605 (SDSI…IDVN), 640–733 (IRTR…RFGI), and 778–800 (PYGMYSDDDANSDASSACSERSY). Residues 550 to 569 (SLPQSDRSSSSSQESLNRPL) show a composition bias toward low complexity. Positions 571-597 (TKRSPTGSTVSRASSTTSKSTPGSLQR) are enriched in polar residues. A compositionally biased stretch (low complexity) spans 645-659 (QSSGSTTSTASTPAD). Composition is skewed to polar residues over residues 669–681 (VSQSQPGSRSNSP) and 715–724 (QGCSRETSPS). The segment covering 789 to 800 (SDASSACSERSY) has biased composition (low complexity). The stretch at 942 to 979 (FIVDQTQTPNLKVKVAILKYIESLARQMDPTDFVNSSE) is one HEAT 5 repeat. A disordered region spans residues 1041 to 1084 (LKNSSNSSMGSPSNTIGRTPSRHSSSRASPLTSPTNCSHGGLSP). The segment covering 1042–1054 (KNSSNSSMGSPSN) has biased composition (low complexity). The segment covering 1066–1078 (SRASPLTSPTNCS) has biased composition (polar residues). HEAT repeat units follow at residues 1272–1309 (LLLETLGDKDHAIRALALRVLREILRNQPARFKNYAEL) and 1390–1427 (GLLQGYDNTESSVRKASVFCLVAIYSVIGEELKPYLAQ).

The protein belongs to the CLASP family.

It localises to the cytoplasm. The protein resides in the cytoskeleton. It is found in the microtubule organizing center. Its subcellular location is the centrosome. The protein localises to the chromosome. It localises to the centromere. The protein resides in the kinetochore. It is found in the spindle. Its subcellular location is the golgi apparatus. The protein localises to the trans-Golgi network. Its function is as follows. Microtubule plus-end tracking protein that promotes the stabilization of dynamic microtubules during anaphase. Plays a crucial role in chromatin-induced microtubule formation. May also act at microtubule minus ends. May be involved in the nucleation of noncentrosomal microtubules originating from the trans-Golgi network (TGN). This chain is CLIP-associating protein 1-A (clasp1-a), found in Xenopus laevis (African clawed frog).